A 145-amino-acid polypeptide reads, in one-letter code: Inner membrane protein YiaA (145 aa).

The Cytoplasmic portion of the chain corresponds to 1-12; it reads MDNKISTYSPAF. The helical transmembrane segment at 13 to 32 threads the bilayer; it reads SIVSWIALVGGIVTYLLGLW. The Periplasmic portion of the chain corresponds to 33–41; sequence NAEMQLNEK. The helical transmembrane segment at 42–59 threads the bilayer; sequence GYYFAVLVLGLFSAASYQ. At 60–71 the chain is on the cytoplasmic side; sequence KTVRDKYEGIPT. Residues 72 to 94 traverse the membrane as a helical segment; it reads TSIYYMTCLTVFIISVALLMVGL. Residues 95 to 98 are Periplasmic-facing; that stretch reads WNAT. The helical transmembrane segment at 99-121 threads the bilayer; sequence LLLSEKGFYGLAFFLSLFGAVAV. Over 122–145 the chain is Cytoplasmic; it reads QKNIRDAGINPPKETQVTQEEYSE.

Its subcellular location is the cell inner membrane. The chain is Inner membrane protein YiaA (yiaA) from Escherichia coli (strain K12).